The primary structure comprises 31 residues: Hyaluronidase (31 aa).

Belongs to the glycosyl hydrolase 56 family. In terms of processing, contains 2 disulfide bonds. N-glycosylated on at least two Asn residues by identical heptasaccharide units composed of Man, GlcNAc, and Fuc residues in the molar ration of 3:2:2. In terms of tissue distribution, expressed by the venom gland.

It localises to the secreted. The enzyme catalyses Random hydrolysis of (1-&gt;4)-linkages between N-acetyl-beta-D-glucosamine and D-glucuronate residues in hyaluronate.. In terms of biological role, hydrolyzes high molecular weight hyaluronic acid to produce small oligosaccharides. The protein is Hyaluronidase of Vespula maculifrons (Eastern yellow jacket).